Here is a 1713-residue protein sequence, read N- to C-terminus: Serine/threonine-protein kinase MRCK beta (1713 aa).

The region spanning 76–342 (FEIIKVIGRG…IEDFKKHAFF (267 aa)) is the Protein kinase domain. Residues 82–90 (IGRGAFGEV) and Lys105 each bind ATP. Asp200 serves as the catalytic Proton acceptor. Ser221 and Ser233 each carry phosphoserine; by autocatalysis. A Phosphothreonine; by autocatalysis modification is found at Thr239. In terms of domain architecture, AGC-kinase C-terminal spans 343–413 (EGLNWENIRN…TTESCFSDRG (71 aa)). Phosphothreonine is present on Thr423. Residues 434–649 (LENSLQIEAY…ASKERKLREH (216 aa)) adopt a coiled-coil conformation. An Omega-N-methylarginine modification is found at Arg671. 2 coiled-coil regions span residues 681-815 (QEIS…AHWE) and 878-939 (ELQS…FRAD). The residue at position 927 (Ser927) is a Phosphoserine. Tyr954 carries the post-translational modification Phosphotyrosine. The span at 971–994 (ASDQETQASKMDLSPSVSVATSTE) shows a compositional bias: polar residues. Residues 971-1022 (ASDQETQASKMDLSPSVSVATSTEQQEDMARPQQRPSPVPLPSTQALAMAGP) are disordered. Residues 1026–1076 (AHQFSIKSFPSPTQCSHCTSLMVGLIRQGYACEVCAFSCHVSCKDSAPQVC) form a Phorbol-ester/DAG-type zinc finger. Residues 1096-1215 (GTAYKGYVKV…WVGILEGLQA (120 aa)) form the PH domain. The 275-residue stretch at 1241–1515 (IKAVLAAAIV…RPLNSDGSLN (275 aa)) folds into the CNH domain. Positions 1585-1598 (ISNPTNFNHVAHMG) constitute a CRIB domain. The disordered stretch occupies residues 1616-1713 (TVQEEKQGPT…EGLDQPSCDA (98 aa)). The segment covering 1666 to 1677 (DFDKEPDSDSTK) has biased composition (basic and acidic residues). Ser1682, Ser1684, Ser1688, Ser1692, and Ser1695 each carry phosphoserine.

It belongs to the protein kinase superfamily. AGC Ser/Thr protein kinase family. DMPK subfamily. As to quaternary structure, homodimer and homotetramer via the coiled coil regions. Interacts tightly with GTP-bound but not GDP-bound CDC42. Interacts with TJP1; this interaction requires the presence of catalytically active CDC42. Forms a tripartite complex with MYO18A and LURAP1 with the latter acting as an adapter connecting CDC42BPB and MYO18A. LURAP1 binding results in activation of CDC42BPB by abolition of its negative autoregulation. Interacts with STRIP1, STRN3 and SIKE1. Interacts with CPNE4 (via VWFA domain). Interacts with LURAP1. Interacts (via AGC-kinase C-terminal domain) with FAM89B/LRAP25 (via LRR repeat). Forms a tripartite complex with FAM89B/LRAP25 and LIMK1. It depends on Mg(2+) as a cofactor. Proteolytically cleaved by caspases upon apoptosis induction.

It localises to the cytoplasm. The protein localises to the cell membrane. It is found in the cell junction. Its subcellular location is the cell projection. The protein resides in the lamellipodium. It catalyses the reaction L-seryl-[protein] + ATP = O-phospho-L-seryl-[protein] + ADP + H(+). The enzyme catalyses L-threonyl-[protein] + ATP = O-phospho-L-threonyl-[protein] + ADP + H(+). Maintained in an inactive, closed conformation by an interaction between the kinase domain and the negative autoregulatory C-terminal coiled-coil region. Agonist binding to the phorbol ester binding site disrupts this, releasing the kinase domain to allow N-terminus-mediated dimerization and kinase activation by transautophosphorylation. Inhibited by chelerythrine chloride. In terms of biological role, serine/threonine-protein kinase which is an important downstream effector of CDC42 and plays a role in the regulation of cytoskeleton reorganization and cell migration. Regulates actin cytoskeletal reorganization via phosphorylation of PPP1R12C and MYL9/MLC2. In concert with MYO18A and LURAP1, is involved in modulating lamellar actomyosin retrograde flow that is crucial to cell protrusion and migration. Phosphorylates PPP1R12A. In concert with FAM89B/LRAP25 mediates the targeting of LIMK1 to the lamellipodium resulting in its activation and subsequent phosphorylation of CFL1 which is important for lamellipodial F-actin regulation. This is Serine/threonine-protein kinase MRCK beta from Mus musculus (Mouse).